The primary structure comprises 716 residues: Translation initiation factor IF-2 (716 aa).

Residues 50 to 136 (YKKGGARAKS…VKPKKELPEK (87 aa)) are disordered. Over residues 62–84 (PAETNKNKQPQGVNQQSAGNQPN) the composition is skewed to polar residues. The segment covering 101–113 (KNKKNNNNKKNKR) has biased composition (basic residues). The segment covering 114–126 (NNNNNKNQHQQKP) has biased composition (low complexity). The region spanning 217-386 (IRPPVVTIMG…LLVSEVEELK (170 aa)) is the tr-type G domain. The interval 226–233 (GHVDHGKT) is G1. Residue 226-233 (GHVDHGKT) participates in GTP binding. The segment at 251-255 (GITQH) is G2. The tract at residues 272–275 (DTPG) is G3. Residues 272–276 (DTPGH) and 326–329 (NKID) each bind GTP. A G4 region spans residues 326 to 329 (NKID). The tract at residues 362-364 (SAL) is G5.

It belongs to the TRAFAC class translation factor GTPase superfamily. Classic translation factor GTPase family. IF-2 subfamily.

It is found in the cytoplasm. Functionally, one of the essential components for the initiation of protein synthesis. Protects formylmethionyl-tRNA from spontaneous hydrolysis and promotes its binding to the 30S ribosomal subunits. Also involved in the hydrolysis of GTP during the formation of the 70S ribosomal complex. In Bacillus subtilis (strain 168), this protein is Translation initiation factor IF-2 (infB).